Here is a 378-residue protein sequence, read N- to C-terminus: AA13 family lytic polysaccharide monooxygenase A (378 aa).

The first 17 residues, 1–17 (MKWSVIQALALASGVQA), serve as a signal peptide directing secretion. His18 is a binding site for Cu(2+). The residue at position 18 (His18) is a Methylhistidine. One can recognise a Chitin-binding type-4 domain in the interval 18 to 244 (HGYLTFPMSR…PQIYLTCADI (227 aa)). Disulfide bonds link Cys39-Cys42, Cys65-Cys241, Cys101-Cys199, Cys117-Cys144, Cys152-Cys160, Cys166-Cys172, and Cys180-Cys188. Position 108 (His108) interacts with Cu(2+). A glycan (N-linked (GlcNAc...) asparagine) is linked at Asn221. A Cu(2+)-binding site is contributed by Tyr238. Low complexity predominate over residues 250-263 (DSQSPPTTTTTSTP). Residues 250–272 (DSQSPPTTTTTSTPASPPPTSCA) form a disordered region. The CBM20 domain occupies 272–378 (ATPAASVAVT…GTATVDTAWK (107 aa)).

This sequence belongs to the polysaccharide monooxygenase AA13 family. It depends on Cu(2+) as a cofactor. Post-translationally, O-mannosylated.

The protein resides in the secreted. It catalyses the reaction starch + reduced acceptor + O2 = D-glucono-1,5-lactone-terminated malto-oligosaccharides + short-chain malto-oligosaccharides + acceptor + H2O.. Activity is inhibited by both beta-cyclodextrin or amylose that block the access to the active site. Starch-active lytic polysaccharide monooxygenase that oxidizes the C1 position of starch substrates. Catalysis by LPMOs requires the reduction of the active-site copper from Cu(II) to Cu(I) by a reducing agent and H(2)O(2) or O(2) as a cosubstrate. This Pyricularia oryzae (strain 70-15 / ATCC MYA-4617 / FGSC 8958) (Rice blast fungus) protein is AA13 family lytic polysaccharide monooxygenase A.